The sequence spans 323 residues: Melanocortin receptor 3 (323 aa).

At 1 to 37 (MNASCCLPSVQPTLPNGSEHLQAPFFSNQSSSAFCEQ) the chain is on the extracellular side. N-linked (GlcNAc...) asparagine glycans are attached at residues Asn2, Asn16, and Asn28. Residues 38-63 (VFIKPEVFLSLGIVSLLENILVILAV) traverse the membrane as a helical segment. Residues 64 to 75 (VRNGNLHSPMYF) are Cytoplasmic-facing. A helical membrane pass occupies residues 76–100 (FLCSLAVADMLVSVSNALETIMIAI). At 101–118 (VHSDYLTFEDQFIQHMDN) the chain is on the extracellular side. Residues 119–140 (IFDSMICISLVASICNLLAIAV) form a helical membrane-spanning segment. Residues 141-160 (DRYVTIFYALRYHSIMTVRK) lie on the Cytoplasmic side of the membrane. The chain crosses the membrane as a helical span at residues 161 to 181 (ALTLIVAIWVCCGVCGVVFIV). Residues 182-186 (YSESK) are Extracellular-facing. A helical membrane pass occupies residues 187 to 210 (MVIVCLITMFFAMMLLMGTLYVHM). The Cytoplasmic segment spans residues 211 to 245 (FLFARLHVKRIAALPPADGVAPQQHSCMKGAVTIT). The chain crosses the membrane as a helical span at residues 246 to 268 (ILLGVFIFCWAPFFLHLVLIITC). At 269–277 (PTNPYCICY) the chain is on the extracellular side. Residues 278-301 (TAHFNTYLVLIMCNSVIDPLIYAF) traverse the membrane as a helical segment. The Cytoplasmic segment spans residues 302–323 (RSLELRNTFREILCGCNGMNLG). Residue Cys315 is the site of S-palmitoyl cysteine attachment.

It belongs to the G-protein coupled receptor 1 family. In terms of tissue distribution, brain, placental, and gut tissues.

It is found in the cell membrane. Its function is as follows. Receptor for MSH (alpha, beta and gamma) and ACTH. This receptor is mediated by G proteins which activate adenylate cyclase. Required for expression of anticipatory patterns of activity and wakefulness during periods of limited nutrient availability and for the normal regulation of circadian clock activity in the brain. This chain is Melanocortin receptor 3 (MC3R), found in Homo sapiens (Human).